Consider the following 363-residue polypeptide: Chorismate synthase (363 aa).

NADP(+) is bound by residues arginine 48 and arginine 54. FMN contacts are provided by residues 131–133 (RSS), 244–245 (NA), glycine 288, 303–307 (KPTSS), and arginine 329.

The protein belongs to the chorismate synthase family. In terms of assembly, homotetramer. Requires FMNH2 as cofactor.

The enzyme catalyses 5-O-(1-carboxyvinyl)-3-phosphoshikimate = chorismate + phosphate. It functions in the pathway metabolic intermediate biosynthesis; chorismate biosynthesis; chorismate from D-erythrose 4-phosphate and phosphoenolpyruvate: step 7/7. Functionally, catalyzes the anti-1,4-elimination of the C-3 phosphate and the C-6 proR hydrogen from 5-enolpyruvylshikimate-3-phosphate (EPSP) to yield chorismate, which is the branch point compound that serves as the starting substrate for the three terminal pathways of aromatic amino acid biosynthesis. This reaction introduces a second double bond into the aromatic ring system. The polypeptide is Chorismate synthase (Maricaulis maris (strain MCS10) (Caulobacter maris)).